The following is a 199-amino-acid chain: 7-methyl-GTP pyrophosphatase (199 aa).

Aspartate 76 serves as the catalytic Proton acceptor.

The protein belongs to the Maf family. YceF subfamily. A divalent metal cation serves as cofactor.

Its subcellular location is the cytoplasm. The enzyme catalyses N(7)-methyl-GTP + H2O = N(7)-methyl-GMP + diphosphate + H(+). In terms of biological role, nucleoside triphosphate pyrophosphatase that hydrolyzes 7-methyl-GTP (m(7)GTP). May have a dual role in cell division arrest and in preventing the incorporation of modified nucleotides into cellular nucleic acids. This chain is 7-methyl-GTP pyrophosphatase (maf-2), found in Brucella suis biovar 1 (strain 1330).